The following is a 293-amino-acid chain: Thiamine-monophosphate kinase (293 aa).

Residues glutamate 25, valine 39, aspartate 40, aspartate 68, and aspartate 113 each coordinate Mg(2+). ATP-binding positions include 112-113 (GD) and arginine 136. Aspartate 194 is a Mg(2+) binding site. Serine 196 contributes to the ATP binding site. Aspartate 197 serves as a coordination point for Mg(2+). Glutamate 243 and tryptophan 286 together coordinate substrate.

This sequence belongs to the thiamine-monophosphate kinase family. As to quaternary structure, homodimer.

It carries out the reaction thiamine phosphate + ATP = thiamine diphosphate + ADP. It participates in cofactor biosynthesis; thiamine diphosphate biosynthesis; thiamine diphosphate from thiamine phosphate: step 1/1. Its activity is regulated as follows. Is inhibited by AMP; the mode of AMP inhibition is uncompetitive for both TMP and ATP. In terms of biological role, catalyzes the ATP-dependent phosphorylation of thiamine-monophosphate (TMP) to form thiamine-pyrophosphate (TPP), the active form of vitamin B1. This chain is Thiamine-monophosphate kinase, found in Pyrobaculum calidifontis (strain DSM 21063 / JCM 11548 / VA1).